Reading from the N-terminus, the 190-residue chain is Iron-sulfur assembly protein 1 (190 aa).

The tract at residues 49–71 (PSLKPSAAGSGSTAPKPVTEREI) is disordered. Fe cation is bound by residues Cys-116, Cys-180, and Cys-182.

This sequence belongs to the HesB/IscA family.

The protein resides in the mitochondrion matrix. Involved in the assembly of mitochondrial and cytoplasmic iron-sulfur proteins. Probably involved in the binding of an intermediate of Fe/S cluster assembly. The chain is Iron-sulfur assembly protein 1 (isa1) from Schizosaccharomyces pombe (strain 972 / ATCC 24843) (Fission yeast).